The primary structure comprises 131 residues: MATVPTRSGSPRQLTTKQTGDAWEVQARRWLEGKGLRFVAANVNERGGEIDLIMREGQTTVFVEVRYRRSALYGGAAASVTRSKQHKLLQTARLWLARHNGSFDTVDCRFDVVAFTGNEVEWIKDAFNDHS.

The span at 1-19 (MATVPTRSGSPRQLTTKQT) shows a compositional bias: polar residues. The interval 1 to 20 (MATVPTRSGSPRQLTTKQTG) is disordered.

This sequence belongs to the UPF0102 family.

This is UPF0102 protein YraN from Escherichia fergusonii (strain ATCC 35469 / DSM 13698 / CCUG 18766 / IAM 14443 / JCM 21226 / LMG 7866 / NBRC 102419 / NCTC 12128 / CDC 0568-73).